A 77-amino-acid polypeptide reads, in one-letter code: Acyl carrier protein (77 aa).

The region spanning 1-76 (MAVFEDVRDV…DVVNYIEKLG (76 aa)) is the Carrier domain. The residue at position 36 (S36) is an O-(pantetheine 4'-phosphoryl)serine.

It belongs to the acyl carrier protein (ACP) family. In terms of processing, 4'-phosphopantetheine is transferred from CoA to a specific serine of apo-ACP by AcpS. This modification is essential for activity because fatty acids are bound in thioester linkage to the sulfhydryl of the prosthetic group.

The protein localises to the cytoplasm. It participates in lipid metabolism; fatty acid biosynthesis. Carrier of the growing fatty acid chain in fatty acid biosynthesis. The protein is Acyl carrier protein of Campylobacter concisus (strain 13826).